A 312-amino-acid chain; its full sequence is Isethionate sulfite-lyase activating enzyme (312 aa).

The region spanning 22–309 (HDGPGIRTIV…VDETRGAVTE (288 aa)) is the Radical SAM core domain. 11 residues coordinate [4Fe-4S] cluster: Cys36, Cys40, Cys43, Cys62, Cys65, Cys68, Cys72, Cys92, Cys95, Cys100, and Cys104. 42–44 (WCS) contributes to the S-adenosyl-L-methionine binding site. 4Fe-4S ferredoxin-type domains follow at residues 53 to 82 (PQVAYNKGRCIGCHRCIKACEHDAITVNED) and 83 to 115 (GTLSLDRGKCDVCKTLDCAHACPAQGMIIYGEN). S-adenosyl-L-methionine contacts are provided by residues Gly144, 193–195 (DVK), and His267.

It belongs to the organic radical-activating enzymes family. In terms of assembly, monomer. It depends on [4Fe-4S] cluster as a cofactor.

It carries out the reaction glycyl-[protein] + reduced [flavodoxin] + S-adenosyl-L-methionine = glycin-2-yl radical-[protein] + semiquinone [flavodoxin] + 5'-deoxyadenosine + L-methionine + H(+). Its pathway is organosulfur degradation; alkanesulfonate degradation. In terms of biological role, involved in an anaerobic respiration pathway that converts the sulfonate taurine (2-aminoethanesulfonate) to ammonia, acetate and sulfide. Catalyzes activation of the isethionate sulfite-lyase IslA under anaerobic conditions by generation of an organic free radical on a glycine residue, via a homolytic cleavage of S-adenosyl-L-methionine (SAM). The polypeptide is Isethionate sulfite-lyase activating enzyme (Bilophila wadsworthia (strain 3_1_6)).